A 300-amino-acid chain; its full sequence is DDRGK domain-containing protein 1 (300 aa).

Residues 1 to 2 (MD) lie on the Lumenal side of the membrane. The helical transmembrane segment at 3-23 (VVLYIAAAAILLVLIVFSVKI) threads the bilayer. Residues 24–300 (RGRTQDADVE…NLTPDIHSSA (277 aa)) are Cytoplasmic-facing. The segment at 28–173 (QDADVEDHQN…RVKEEQERRE (146 aa)) is disordered. Over residues 78–90 (NEDSPVEADEDEE) the composition is skewed to acidic residues. The span at 112–173 (KLEEKQARKA…RVKEEQERRE (62 aa)) shows a compositional bias: basic and acidic residues. Residues 183 to 197 (SFIIEDQGEAEELTE) carry the UFM1-interacting motif (UFIM) motif. The PCI domain maps to 217–261 (VLLEDLASQFGLRTQDAIARLQDLIADGSLTGVIDDRGKFIFITP).

It belongs to the DDRGK1 family. As to quaternary structure, component of the UFM1 ribosome E3 ligase (UREL) complex, composed of ufl1, ddrgk1 and cdk5rap3.

It localises to the endoplasmic reticulum membrane. In terms of biological role, component of the UFM1 ribosome E3 ligase (UREL) complex, a multiprotein complex that catalyzes ufmylation of endoplasmic reticulum-docked proteins. The UREL complex plays a key role in ribosome recycling by mediating mono-ufmylation of the RPL26/uL24 subunit of the 60S ribosome following ribosome dissociation: ufmylation weakens the junction between post-termination 60S subunits and SEC61 translocons, promoting release and recycling of the large ribosomal subunit from the endoplasmic reticulum membrane. Ufmylation of RPL26/uL24 and subsequent 60S ribosome recycling either take place after normal termination of translation or after ribosome stalling during cotranslational translocation at the endoplasmic reticulum. Within the UREL complex, DDRGK1 tethers the complex to the endoplasmic reticulum membrane to restrict its activity to endoplasmic reticulum-docked ribosomes and acts as an ufmylation 'reader': following RPL26/uL24 ufmylation, DDRGK1 specifically binds to ufmylated RPL26/uL24 via its UFIM motif, resulting in stable association between the 60S ribosome and the UREL complex, followed by dissociation of the 60S ribosome subunit from the endoplasmic reticulum membrane. The UREL complex is also involved in reticulophagy in response to endoplasmic reticulum stress by promoting ufmylation of proteins such as CYB5R3 and RPN1, thereby promoting lysosomal degradation of ufmylated proteins. Plays a role in cartilage development through sox9, inhibiting the ubiquitin-mediated proteasomal degradation of this transcriptional regulator. Required for stabilization and ufmylation of ATG9A. This chain is DDRGK domain-containing protein 1, found in Danio rerio (Zebrafish).